Consider the following 479-residue polypeptide: Probable acyl-CoA desaturase (479 aa).

Over residues 1-18 the composition is skewed to low complexity; the sequence is MTAPSATAFSSATTQPTT. A disordered region spans residues 1–28; it reads MTAPSATAFSSATTQPTTEGNASMRKRT. Over 1–61 the chain is Cytoplasmic; sequence MTAPSATAFS…PWTMQNWWRH (61 aa). Residues 62–82 form a helical membrane-spanning segment; sequence LNWLHCMLIFGLPMIAIYGVF. Residues 83-89 lie on the Lumenal side of the membrane; sequence TTPLQTK. A helical transmembrane segment spans residues 90–110; it reads TLIFAIIYYAYSGLGITAGYH. Fe cation contacts are provided by histidine 110, histidine 115, histidine 147, histidine 150, and histidine 151. Residues 110–115 carry the Histidine box-1 motif; it reads HRLWSH. Over 111 to 204 the chain is Cytoplasmic; it reads RLWSHRAYKA…DPFVMFNHRH (94 aa). Positions 147–151 match the Histidine box-2 motif; the sequence is HRAHH. A helical membrane pass occupies residues 205-225; the sequence is FLPIASFMAFIFPSLFCGLLW. At 226 to 229 the chain is on the lumenal side; the sequence is GDYR. Residues 230–250 traverse the membrane as a helical segment; that stretch reads GGYFYAGVCRLVFVHHATFCV. The Cytoplasmic portion of the chain corresponds to 251-479; the sequence is NSLAHLIGSQ…QPPIEAAAAN (229 aa). The Fe cation site is built by histidine 255, histidine 284, histidine 287, and histidine 288. The Histidine box-3 signature appears at 284–288; it reads HNYHH. The 77-residue stretch at 357-433 folds into the Cytochrome b5 heme-binding domain; that stretch reads QLPVMEFEDF…LSTYRVAVVR (77 aa). Heme contacts are provided by histidine 390 and histidine 416.

This sequence belongs to the fatty acid desaturase type 1 family. It depends on Fe(2+) as a cofactor.

Its subcellular location is the membrane. It carries out the reaction octadecanoyl-CoA + 2 Fe(II)-[cytochrome b5] + O2 + 2 H(+) = (9Z)-octadecenoyl-CoA + 2 Fe(III)-[cytochrome b5] + 2 H2O. In terms of biological role, stearoyl-CoA desaturase that utilizes O(2) and electrons from reduced cytochrome b5 to introduce the first double bond into saturated fatty acyl-CoA substrates. Catalyzes the insertion of a cis double bond at the delta-9 position into fatty acyl-CoA substrates including palmitoyl-CoA and stearoyl-CoA. Contributes to the biosynthesis of membrane phospholipids, cholesterol esters and triglycerides. This is Probable acyl-CoA desaturase from Schizosaccharomyces pombe (strain 972 / ATCC 24843) (Fission yeast).